A 574-amino-acid polypeptide reads, in one-letter code: Cyclomaltodextrinase (574 aa).

Ca(2+)-binding residues include Asn144, Asp146, Asn149, Asp150, Gly168, and Asp170. Substrate-binding residues include His243 and Arg323. The Nucleophile role is filled by Asp325. Residue Glu354 is the Proton donor of the active site. Substrate is bound by residues 420–421 (HD), Asp465, and Arg469.

Belongs to the glycosyl hydrolase 13 family. In terms of assembly, monomer. Requires Ca(2+) as cofactor.

The catalysed reaction is cyclomaltodextrin + H2O = linear maltodextrin. Functionally, hydrolyzes cyclodextrins. Can also act on linear maltodextrins, with the exception of maltose. The protein is Cyclomaltodextrinase of Thermoanaerobacter pseudethanolicus (strain ATCC 33223 / 39E) (Clostridium thermohydrosulfuricum).